The chain runs to 1381 residues: DNA-directed RNA polymerase subunit beta'' (1381 aa).

Zn(2+) contacts are provided by Cys-224, Cys-296, Cys-303, and Cys-306.

The protein belongs to the RNA polymerase beta' chain family. RpoC2 subfamily. In plastids the minimal PEP RNA polymerase catalytic core is composed of four subunits: alpha, beta, beta', and beta''. When a (nuclear-encoded) sigma factor is associated with the core the holoenzyme is formed, which can initiate transcription. It depends on Zn(2+) as a cofactor.

Its subcellular location is the plastid. The protein localises to the chloroplast. It carries out the reaction RNA(n) + a ribonucleoside 5'-triphosphate = RNA(n+1) + diphosphate. In terms of biological role, DNA-dependent RNA polymerase catalyzes the transcription of DNA into RNA using the four ribonucleoside triphosphates as substrates. The sequence is that of DNA-directed RNA polymerase subunit beta'' from Drimys granadensis.